Consider the following 285-residue polypeptide: Urease accessory protein UreD 1 (285 aa).

The protein belongs to the UreD family. In terms of assembly, ureD, UreF and UreG form a complex that acts as a GTP-hydrolysis-dependent molecular chaperone, activating the urease apoprotein by helping to assemble the nickel containing metallocenter of UreC. The UreE protein probably delivers the nickel.

It localises to the cytoplasm. Functionally, required for maturation of urease via the functional incorporation of the urease nickel metallocenter. This chain is Urease accessory protein UreD 1, found in Pseudomonas syringae pv. syringae (strain B728a).